A 503-amino-acid chain; its full sequence is Lysine--tRNA ligase (503 aa).

The Mg(2+) site is built by Glu414 and Glu421.

Belongs to the class-II aminoacyl-tRNA synthetase family. As to quaternary structure, homodimer. Mg(2+) is required as a cofactor.

The protein localises to the cytoplasm. The enzyme catalyses tRNA(Lys) + L-lysine + ATP = L-lysyl-tRNA(Lys) + AMP + diphosphate. The sequence is that of Lysine--tRNA ligase from Neisseria gonorrhoeae (strain NCCP11945).